A 258-amino-acid chain; its full sequence is Uroplakin-1a (258 aa).

Over Met-1 to Pro-14 the chain is Cytoplasmic. A helical transmembrane segment spans residues Val-15–Phe-35. At Ala-36–Asp-59 the chain is on the extracellular side. Residues Val-60–Leu-86 traverse the membrane as a helical segment. Topologically, residues Cys-87 to Ser-91 are cytoplasmic. The chain crosses the membrane as a helical span at residues Met-92–Ile-112. Topologically, residues Thr-113–Thr-230 are extracellular. Asn-170 carries N-linked (GlcNAc...) asparagine glycosylation. A helical membrane pass occupies residues Trp-231–Met-252. Residues Tyr-253 to Leu-258 lie on the Cytoplasmic side of the membrane.

Belongs to the tetraspanin (TM4SF) family. In terms of assembly, homodimer; disulfide-linked. Interacts with uroplakin-2 (UPK2). High expression restricted to ureteric urothelium (most superficial cells); low expression in prostate. Expression in normal urothelial cells is lost in culture. Some expression in tumor cell lines derived from urothelial malignancies.

The protein resides in the membrane. Component of the asymmetric unit membrane (AUM); a highly specialized biomembrane elaborated by terminally differentiated urothelial cells. May play an important role in normal bladder epithelial physiology, possibly in regulating membrane permeability of superficial umbrella cells or in stabilizing the apical membrane through AUM/cytoskeletal interactions. The sequence is that of Uroplakin-1a (UPK1A) from Homo sapiens (Human).